The sequence spans 377 residues: Protein RecA (377 aa).

The span at 1–13 (MSNEGKPLQSTES) shows a compositional bias: polar residues. The interval 1 to 20 (MSNEGKPLQSTESTKIDAKS) is disordered. 82–89 (GPESSGKT) contributes to the ATP binding site. Residues 346 to 377 (GSEVSANSMRPLASAARQASSRPKLSQVSANG) form a disordered region. A compositionally biased stretch (polar residues) spans 362-377 (RQASSRPKLSQVSANG).

The protein belongs to the RecA family.

Its subcellular location is the cytoplasm. Functionally, can catalyze the hydrolysis of ATP in the presence of single-stranded DNA, the ATP-dependent uptake of single-stranded DNA by duplex DNA, and the ATP-dependent hybridization of homologous single-stranded DNAs. It interacts with LexA causing its activation and leading to its autocatalytic cleavage. The chain is Protein RecA from Prochlorococcus marinus (strain NATL1A).